Here is a 95-residue protein sequence, read N- to C-terminus: Small ribosomal subunit protein bS20 (95 aa).

Residues 1 to 22 are disordered; sequence MANIKSQIKRNRTNENNRLRNK. Residues 12–22 are compositionally biased toward basic and acidic residues; the sequence is RTNENNRLRNK.

It belongs to the bacterial ribosomal protein bS20 family.

Functionally, binds directly to 16S ribosomal RNA. The chain is Small ribosomal subunit protein bS20 from Tropheryma whipplei (strain TW08/27) (Whipple's bacillus).